We begin with the raw amino-acid sequence, 160 residues long: Arsenate reductase 2.1 (160 aa).

Residues Ser42–Arg143 enclose the Rhodanese domain. Cys94 (cysteine persulfide intermediate) is an active-site residue.

It catalyses the reaction [glutaredoxin]-dithiol + arsenate + glutathione + H(+) = glutathionyl-S-S-[glutaredoxin] + arsenite + H2O. Possesses arsenate reductase activity in vitro. Catalyzes the reduction of arsenate [As(V)] to arsenite [As(III)]. May play a role in arsenic retention in roots. Functionally, possesses phosphatase activity towards p-nitrophenyl phosphate in vitro. The protein is Arsenate reductase 2.1 (ACR2.1) of Oryza sativa subsp. japonica (Rice).